The following is a 564-amino-acid chain: Glutamate--tRNA ligase (564 aa).

Residues 107–117 (PNPNGPPTLGS) carry the 'HIGH' region motif.

The protein belongs to the class-I aminoacyl-tRNA synthetase family. Glutamate--tRNA ligase type 2 subfamily.

The protein resides in the cytoplasm. It carries out the reaction tRNA(Glu) + L-glutamate + ATP = L-glutamyl-tRNA(Glu) + AMP + diphosphate. Its function is as follows. Catalyzes the attachment of glutamate to tRNA(Glu) in a two-step reaction: glutamate is first activated by ATP to form Glu-AMP and then transferred to the acceptor end of tRNA(Glu). The polypeptide is Glutamate--tRNA ligase (Methanothrix thermoacetophila (strain DSM 6194 / JCM 14653 / NBRC 101360 / PT) (Methanosaeta thermophila)).